A 414-amino-acid chain; its full sequence is Alanine--glyoxylate aminotransferase (414 aa).

The transit peptide at 1-23 (MFRALARASATLGPQVAGWARTM) directs the protein to the mitochondrion. K231 is subject to N6-(pyridoxal phosphate)lysine. Residue K247 is modified to N6-acetyllysine; alternate. N6-succinyllysine; alternate is present on K247. 2 positions are modified to N6-acetyllysine: K256 and K334. R382 serves as a coordination point for substrate. The short motif at 412 to 414 (NKL) is the Microbody targeting signal element.

The protein belongs to the class-V pyridoxal-phosphate-dependent aminotransferase family. In terms of assembly, homodimer. Pyridoxal 5'-phosphate is required as a cofactor.

It is found in the peroxisome. It localises to the mitochondrion matrix. It carries out the reaction L-serine + pyruvate = 3-hydroxypyruvate + L-alanine. It catalyses the reaction glyoxylate + L-alanine = glycine + pyruvate. In terms of biological role, catalyzes the transamination of glyoxylate to glycine and contributes to the glyoxylate detoxification. Catalyzes the transamination between L-serine and pyruvate and contributes to gluconeogenesis from the L-serine metabolism. This is Alanine--glyoxylate aminotransferase from Felis catus (Cat).